Here is a 343-residue protein sequence, read N- to C-terminus: Dimethyladenosine transferase 1, mitochondrial (343 aa).

S-adenosyl-L-methionine contacts are provided by residues 28–31, asparagine 29, leucine 31, glycine 56, glutamate 78, aspartate 133, and asparagine 169; that span reads QNFL.

This sequence belongs to the class I-like SAM-binding methyltransferase superfamily. rRNA adenine N(6)-methyltransferase family. KsgA subfamily.

It is found in the mitochondrion. Probable S-adenosyl-L-methionine-dependent methyltransferase which specifically dimethylates mitochondrial 12S rRNA at the conserved stem loop. Also required for basal transcription of mitochondrial DNA. Stimulates transcription independently of the methyltransferase activity. This is Dimethyladenosine transferase 1, mitochondrial from Vermamoeba vermiformis (Amoeba).